The sequence spans 226 residues: Lysoplasmalogenase TMEM86B (226 aa).

Over 1–23 (MDPGKEGLPRKPRFSAQQLHVGK) the chain is Cytoplasmic. Residues 24 to 40 (WLSPFFFTCAVYFLLWI) form a helical membrane-spanning segment. The Extracellular portion of the chain corresponds to 41–46 (PDDQPS). The helical transmembrane segment at 47–64 (WVGALVKCLPVLSLVVFL) threads the bilayer. The Cytoplasmic portion of the chain corresponds to 65-76 (RAVDAGGGYSAR). The chain crosses the membrane as a helical span at residues 77–93 (LQGALLCSAVGDACLVW). Residues 94-99 (PEAFLH) lie on the Extracellular side of the membrane. A helical membrane pass occupies residues 100 to 117 (GVAAFAAAHLLYLWAFGL). Topologically, residues 118-123 (TPLQPG) are cytoplasmic. A helical transmembrane segment spans residues 124–140 (LLLLVILAALPYYGLLL). The Extracellular segment spans residues 141–146 (WHLPPD). Residues 147–163 (LVLALTAYSLALATMLW) form a helical membrane-spanning segment. Residues 164 to 171 (RGLARGGS) are Cytoplasmic-facing. Residues 172–188 (TGWGALLFTLSDTTLAW) traverse the membrane as a helical segment. Residues 189–199 (NAFAQPLPHAR) lie on the Extracellular side of the membrane. A helical transmembrane segment spans residues 200-217 (LVVMTTYYSAQVLISLSV). Topologically, residues 218 to 226 (SQSPKLKPN) are cytoplasmic.

Belongs to the TMEM86 family. In terms of assembly, homodimer.

It is found in the endoplasmic reticulum membrane. The protein resides in the cytoplasm. It catalyses the reaction a 1-O-(1Z-alkenyl)-sn-glycero-3-phosphocholine + H2O = a 2,3-saturated aldehyde + sn-glycerol 3-phosphocholine. It carries out the reaction a 1-O-(1Z-alkenyl)-sn-glycero-3-phosphoethanolamine + H2O = a 2,3-saturated aldehyde + sn-glycero-3-phosphoethanolamine. With respect to regulation, competitively inhibited by lysophosphatidic acid. Its function is as follows. Catalyzes the hydrolysis of the vinyl ether bond of choline or ethanolamine lysoplasmalogens, forming fatty aldehyde and glycerophosphocholine or glycerophosphoethanolamine, respectively and is specific for the sn-2-deacylated (lyso) form of plasmalogen. The polypeptide is Lysoplasmalogenase TMEM86B (TMEM86B) (Sus scrofa (Pig)).